Here is a 224-residue protein sequence, read N- to C-terminus: ATP-dependent dethiobiotin synthetase BioD (224 aa).

Residue Gly-12–Phe-17 coordinates ATP. Position 16 (Thr-16) interacts with Mg(2+). Lys-37 is a catalytic residue. Thr-41 is a substrate binding site. ATP-binding positions include Asn-52, Glu-107 to Gly-110, Gly-167 to Ser-168, Pro-197 to Gly-199, and Glu-204. The Mg(2+) site is built by Asn-52 and Glu-107.

It belongs to the dethiobiotin synthetase family. Homodimer. It depends on Mg(2+) as a cofactor.

Its subcellular location is the cytoplasm. The catalysed reaction is (7R,8S)-7,8-diammoniononanoate + CO2 + ATP = (4R,5S)-dethiobiotin + ADP + phosphate + 3 H(+). The protein operates within cofactor biosynthesis; biotin biosynthesis; biotin from 7,8-diaminononanoate: step 1/2. In terms of biological role, catalyzes a mechanistically unusual reaction, the ATP-dependent insertion of CO2 between the N7 and N8 nitrogen atoms of 7,8-diaminopelargonic acid (DAPA, also called 7,8-diammoniononanoate) to form a ureido ring. In Corynebacterium glutamicum (strain ATCC 13032 / DSM 20300 / JCM 1318 / BCRC 11384 / CCUG 27702 / LMG 3730 / NBRC 12168 / NCIMB 10025 / NRRL B-2784 / 534), this protein is ATP-dependent dethiobiotin synthetase BioD.